The primary structure comprises 316 residues: 4-hydroxy-3-methylbut-2-enyl diphosphate reductase (316 aa).

[4Fe-4S] cluster is bound at residue C12. Positions 41 and 74 each coordinate (2E)-4-hydroxy-3-methylbut-2-enyl diphosphate. Dimethylallyl diphosphate is bound by residues H41 and H74. The isopentenyl diphosphate site is built by H41 and H74. C96 is a binding site for [4Fe-4S] cluster. A (2E)-4-hydroxy-3-methylbut-2-enyl diphosphate-binding site is contributed by H124. H124 is a dimethylallyl diphosphate binding site. H124 contributes to the isopentenyl diphosphate binding site. Residue E126 is the Proton donor of the active site. T167 contributes to the (2E)-4-hydroxy-3-methylbut-2-enyl diphosphate binding site. Position 197 (C197) interacts with [4Fe-4S] cluster. 4 residues coordinate (2E)-4-hydroxy-3-methylbut-2-enyl diphosphate: S225, S226, N227, and S269. The dimethylallyl diphosphate site is built by S225, S226, N227, and S269. S225, S226, N227, and S269 together coordinate isopentenyl diphosphate.

The protein belongs to the IspH family. As to quaternary structure, homodimer. [4Fe-4S] cluster is required as a cofactor.

The enzyme catalyses isopentenyl diphosphate + 2 oxidized [2Fe-2S]-[ferredoxin] + H2O = (2E)-4-hydroxy-3-methylbut-2-enyl diphosphate + 2 reduced [2Fe-2S]-[ferredoxin] + 2 H(+). It carries out the reaction dimethylallyl diphosphate + 2 oxidized [2Fe-2S]-[ferredoxin] + H2O = (2E)-4-hydroxy-3-methylbut-2-enyl diphosphate + 2 reduced [2Fe-2S]-[ferredoxin] + 2 H(+). It participates in isoprenoid biosynthesis; dimethylallyl diphosphate biosynthesis; dimethylallyl diphosphate from (2E)-4-hydroxy-3-methylbutenyl diphosphate: step 1/1. Its pathway is isoprenoid biosynthesis; isopentenyl diphosphate biosynthesis via DXP pathway; isopentenyl diphosphate from 1-deoxy-D-xylulose 5-phosphate: step 6/6. In terms of biological role, catalyzes the conversion of 1-hydroxy-2-methyl-2-(E)-butenyl 4-diphosphate (HMBPP) into a mixture of isopentenyl diphosphate (IPP) and dimethylallyl diphosphate (DMAPP). Acts in the terminal step of the DOXP/MEP pathway for isoprenoid precursor biosynthesis. This is 4-hydroxy-3-methylbut-2-enyl diphosphate reductase from Klebsiella pneumoniae (strain 342).